Reading from the N-terminus, the 433-residue chain is Trigger factor (433 aa).

The region spanning 161 to 246 (EDRVVIDFVG…LKKVENIVLP (86 aa)) is the PPIase FKBP-type domain.

Belongs to the FKBP-type PPIase family. Tig subfamily.

It localises to the cytoplasm. It carries out the reaction [protein]-peptidylproline (omega=180) = [protein]-peptidylproline (omega=0). Involved in protein export. Acts as a chaperone by maintaining the newly synthesized protein in an open conformation. Functions as a peptidyl-prolyl cis-trans isomerase. This chain is Trigger factor, found in Actinobacillus pleuropneumoniae serotype 7 (strain AP76).